Reading from the N-terminus, the 227-residue chain is Cytochrome c oxidase subunit 2 (227 aa).

The Mitochondrial intermembrane portion of the chain corresponds to 1-14 (MAYPFQLGLQDATS). A helical transmembrane segment spans residues 15 to 45 (PIMEELLHFHDHTLMIVFLISSLVLYIITLM). Residues 46 to 59 (LTTKLTHTSTMDAQ) lie on the Mitochondrial matrix side of the membrane. The chain crosses the membrane as a helical span at residues 60-87 (EVETVWTILPAIILVLIALPSLRILYMM). The Mitochondrial intermembrane portion of the chain corresponds to 88–227 (DEINNPSLTV…YFETWSALMV (140 aa)). Cu cation-binding residues include His161, Cys196, Glu198, Cys200, His204, and Met207. Mg(2+) is bound at residue Glu198. Tyr218 carries the post-translational modification Phosphotyrosine.

Belongs to the cytochrome c oxidase subunit 2 family. As to quaternary structure, component of the cytochrome c oxidase (complex IV, CIV), a multisubunit enzyme composed of 14 subunits. The complex is composed of a catalytic core of 3 subunits MT-CO1, MT-CO2 and MT-CO3, encoded in the mitochondrial DNA, and 11 supernumerary subunits COX4I, COX5A, COX5B, COX6A, COX6B, COX6C, COX7A, COX7B, COX7C, COX8 and NDUFA4, which are encoded in the nuclear genome. The complex exists as a monomer or a dimer and forms supercomplexes (SCs) in the inner mitochondrial membrane with NADH-ubiquinone oxidoreductase (complex I, CI) and ubiquinol-cytochrome c oxidoreductase (cytochrome b-c1 complex, complex III, CIII), resulting in different assemblies (supercomplex SCI(1)III(2)IV(1) and megacomplex MCI(2)III(2)IV(2)). Found in a complex with TMEM177, COA6, COX18, COX20, SCO1 and SCO2. Interacts with TMEM177 in a COX20-dependent manner. Interacts with COX20. Interacts with COX16. Cu cation serves as cofactor.

The protein localises to the mitochondrion inner membrane. It carries out the reaction 4 Fe(II)-[cytochrome c] + O2 + 8 H(+)(in) = 4 Fe(III)-[cytochrome c] + 2 H2O + 4 H(+)(out). In terms of biological role, component of the cytochrome c oxidase, the last enzyme in the mitochondrial electron transport chain which drives oxidative phosphorylation. The respiratory chain contains 3 multisubunit complexes succinate dehydrogenase (complex II, CII), ubiquinol-cytochrome c oxidoreductase (cytochrome b-c1 complex, complex III, CIII) and cytochrome c oxidase (complex IV, CIV), that cooperate to transfer electrons derived from NADH and succinate to molecular oxygen, creating an electrochemical gradient over the inner membrane that drives transmembrane transport and the ATP synthase. Cytochrome c oxidase is the component of the respiratory chain that catalyzes the reduction of oxygen to water. Electrons originating from reduced cytochrome c in the intermembrane space (IMS) are transferred via the dinuclear copper A center (CU(A)) of subunit 2 and heme A of subunit 1 to the active site in subunit 1, a binuclear center (BNC) formed by heme A3 and copper B (CU(B)). The BNC reduces molecular oxygen to 2 water molecules using 4 electrons from cytochrome c in the IMS and 4 protons from the mitochondrial matrix. This Vulpes zerda (Fennec fox) protein is Cytochrome c oxidase subunit 2 (MT-CO2).